Reading from the N-terminus, the 399-residue chain is CCA-adding enzyme (399 aa).

2 residues coordinate ATP: Gly33 and Arg36. CTP-binding residues include Gly33 and Arg36. Residues Asp46 and Asp48 each coordinate Mg(2+). ATP-binding residues include Arg117, Asp160, Arg163, Arg166, and Arg169. Residues Arg117, Asp160, Arg163, Arg166, and Arg169 each contribute to the CTP site.

The protein belongs to the tRNA nucleotidyltransferase/poly(A) polymerase family. Bacterial CCA-adding enzyme type 3 subfamily. In terms of assembly, homodimer. Mg(2+) serves as cofactor.

It catalyses the reaction a tRNA precursor + 2 CTP + ATP = a tRNA with a 3' CCA end + 3 diphosphate. It carries out the reaction a tRNA with a 3' CCA end + 2 CTP + ATP = a tRNA with a 3' CCACCA end + 3 diphosphate. In terms of biological role, catalyzes the addition and repair of the essential 3'-terminal CCA sequence in tRNAs without using a nucleic acid template. Adds these three nucleotides in the order of C, C, and A to the tRNA nucleotide-73, using CTP and ATP as substrates and producing inorganic pyrophosphate. tRNA 3'-terminal CCA addition is required both for tRNA processing and repair. Also involved in tRNA surveillance by mediating tandem CCA addition to generate a CCACCA at the 3' terminus of unstable tRNAs. While stable tRNAs receive only 3'-terminal CCA, unstable tRNAs are marked with CCACCA and rapidly degraded. This chain is CCA-adding enzyme, found in Lactobacillus helveticus (strain DPC 4571).